The primary structure comprises 239 residues: Peroxygenase (239 aa).

Glycine 2 is modified (N-acetylglycine). The EF-hand domain maps to 60–95 (HNMSVLQQRAAFFDRNNDGIVYPWETYQGFRAVGFG). Residues aspartate 73, asparagine 75, aspartate 77, and glutamate 84 each coordinate Ca(2+). A Proline-knot motif is present at residues 116–125 (PSWIPSPVLS).

Belongs to the caleosin family. As to quaternary structure, homodimer. Requires heme b as cofactor. It depends on Ca(2+) as a cofactor. As to expression, expressed in pollen (at protein level). Not expressed in leaf, root, stem, tepal, ovary, style, filament or stigma (at protein level).

It localises to the lipid droplet. The protein resides in the microsome membrane. It carries out the reaction RH + ROOH = ROH + ROH.. Calcium-binding peroxygenase involved in the degradation of storage lipid in oil bodies. The sequence is that of Peroxygenase from Lilium longiflorum (Trumpet lily).